The sequence spans 280 residues: H-2 class II histocompatibility antigen gamma chain (280 aa).

Topologically, residues 1 to 30 are cytoplasmic; sequence MDDQRDLISNHEQLPILGQRARAPESNCNR. Phosphoserine is present on Ser-9. Residues 31-56 form a helical; Signal-anchor for type II membrane protein membrane-spanning segment; the sequence is GVLYTSVSVLVALLLAGQATTAYFLY. Topologically, residues 57-280 are extracellular; the sequence is QQQGRLDKLT…TKQDMGQMFL (224 aa). Residues Asn-114 and Asn-120 are each glycosylated (N-linked (GlcNAc...) asparagine). The 62-residue stretch at 194-255 folds into the Thyroglobulin type-1 domain; it reads LTKCQEEVSH…HTKSRGRHNC (62 aa). 3 cysteine pairs are disulfide-bonded: Cys-197/Cys-216, Cys-227/Cys-234, and Cys-236/Cys-255. A disordered region spans residues 246-268; it reads HTKSRGRHNCSEPLDMEDPSSGL. Residue Ser-266 is glycosylated (O-linked (Xyl...) (chondroitin sulfate) serine).

In terms of assembly, nonamer composed of three alpha/beta/gamma heterotrimers. Interacts with CD44; this complex is essential for the MIF-induced signaling cascade that results in B cell survival. Interacts with the mature form of CTSL; the complex survive in neutral pH environment.

The protein resides in the late endosome. The protein localises to the lysosome. It localises to the cell membrane. Its subcellular location is the endoplasmic reticulum membrane. It is found in the golgi apparatus. The protein resides in the trans-Golgi network. The protein localises to the endosome. It localises to the secreted. In terms of biological role, plays a critical role in MHC class II antigen processing by stabilizing peptide-free class II alpha/beta heterodimers in a complex soon after their synthesis and directing transport of the complex from the endoplasmic reticulum to compartments where peptide loading of class II takes place. Enhance also the stimulation of T-cell responses through interaction with CD44. Functionally, binds to the peptide-binding site of MHC class II alpha/beta heterodimers forming an alpha-beta-CLIP complex, thereby preventing the loading of antigenic peptides to the MHC class II complex until its release by HLA-DM in the endosome. Stabilizes the conformation of mature CTSL by binding to its active site and serving as a chaperone to help maintain a pool of mature enzyme in endocytic compartments and extracellular space of antigen-presenting cells (APCs). This chain is H-2 class II histocompatibility antigen gamma chain, found in Rattus norvegicus (Rat).